A 345-amino-acid polypeptide reads, in one-letter code: N-acetyl-gamma-glutamyl-phosphate reductase (345 aa).

The active site involves Cys-149.

The protein belongs to the NAGSA dehydrogenase family. Type 1 subfamily.

The protein localises to the cytoplasm. It carries out the reaction N-acetyl-L-glutamate 5-semialdehyde + phosphate + NADP(+) = N-acetyl-L-glutamyl 5-phosphate + NADPH + H(+). Its pathway is amino-acid biosynthesis; L-arginine biosynthesis; N(2)-acetyl-L-ornithine from L-glutamate: step 3/4. Catalyzes the NADPH-dependent reduction of N-acetyl-5-glutamyl phosphate to yield N-acetyl-L-glutamate 5-semialdehyde. This chain is N-acetyl-gamma-glutamyl-phosphate reductase, found in Bacillus mycoides (strain KBAB4) (Bacillus weihenstephanensis).